The sequence spans 354 residues: Annexin A13 (354 aa).

Annexin repeat units lie at residues 26 to 97, 98 to 177, 203 to 275, and 279 to 350; these read NDPN…MLLT, DTDK…ALLQ, NLVE…LTLN, and NRPK…ALIG. Residues M39, G41, G43, T44, E46, E83, M111, G113, G115, E118, D163, D265, M292, G294, L295, G296, and E336 each coordinate Ca(2+).

Belongs to the annexin family. Homodimer.

The protein localises to the tegument. The protein resides in the secreted. Its subcellular location is the extracellular exosome. It localises to the host cell. In terms of biological role, involved in reproduction of the worm. Involved in host-parasite interaction. Delivered into the host cell by means of parasite exosomes. Binds to acidic phospholipid membranes in a calcium-dependent manner in vitro. Causes aggregation of liposomes in the presence of calcium, but not in its absence. Likely to promote membrane fusion. May provide structural integrity within the tegument. The chain is Annexin A13 from Schistosoma japonicum (Blood fluke).